The sequence spans 207 residues: MASRRRMLLKVIILGDSGVGKTSLMNQYVNRKFSNQYKATIGADFLTKEVQFEDRLFTLQIWDTAGQERFQSLGVAFYRGADCCVLVYDVNVMKSFENLNNWREEFLIQATPSDPENFPFVVLGNKIDVDGGNSRVVSEKKAKAWCASKGNIPYFETSAKEGFNVDDAFQCIAKNALNNEPEEEIYLPDTIDVAGGGRQQRSSGCEC.

GTP-binding positions include 15–22, 63–67, and 125–128; these read GDSGVGKT, DTAGQ, and NKID. S-geranylgeranyl cysteine attachment occurs at residues Cys205 and Cys207. Cys207 bears the Cysteine methyl ester mark.

Belongs to the small GTPase superfamily. Rab family.

Its subcellular location is the cell membrane. In terms of biological role, protein transport. Probably involved in vesicular traffic. This Prunus armeniaca (Apricot) protein is Ras-related protein Rab7.